Consider the following 123-residue polypeptide: MKALASRGTRNHLAGEAAENSVLRDYERRGYHLVRRRWRGRCGEIDLIARSGDEVVFVEVKQSRDFARAAESLGARQMKRLHAAAAEFLAEEPDGQLTPMRFDVALVDGTGRLEIVENAFGHG.

This sequence belongs to the UPF0102 family.

This Ruegeria pomeroyi (strain ATCC 700808 / DSM 15171 / DSS-3) (Silicibacter pomeroyi) protein is UPF0102 protein SPO0400.